The sequence spans 138 residues: ATP synthase epsilon chain (138 aa).

This sequence belongs to the ATPase epsilon chain family. As to quaternary structure, F-type ATPases have 2 components, CF(1) - the catalytic core - and CF(0) - the membrane proton channel. CF(1) has five subunits: alpha(3), beta(3), gamma(1), delta(1), epsilon(1). CF(0) has three main subunits: a, b and c.

It localises to the cell inner membrane. In terms of biological role, produces ATP from ADP in the presence of a proton gradient across the membrane. This is ATP synthase epsilon chain from Bartonella quintana (strain Toulouse) (Rochalimaea quintana).